The chain runs to 541 residues: Membrane protein insertase YidC (541 aa).

6 consecutive transmembrane segments (helical) span residues 6–26, 325–345, 349–369, 420–440, 457–477, and 500–520; these read NILL…WQAD, LVVD…LLMF, FVGN…GLLF, GGCL…WVLL, LSVQ…MFVM, and VIFT…WLVG.

Belongs to the OXA1/ALB3/YidC family. Type 1 subfamily. Interacts with the Sec translocase complex via SecD. Specifically interacts with transmembrane segments of nascent integral membrane proteins during membrane integration.

The protein localises to the cell inner membrane. Functionally, required for the insertion and/or proper folding and/or complex formation of integral membrane proteins into the membrane. Involved in integration of membrane proteins that insert both dependently and independently of the Sec translocase complex, as well as at least some lipoproteins. Aids folding of multispanning membrane proteins. In Shewanella baltica (strain OS223), this protein is Membrane protein insertase YidC.